The sequence spans 344 residues: Lipase chaperone (344 aa).

A helical membrane pass occupies residues 14–34; the sequence is AMVYGVVGLAAIAGVAMWSGA.

Belongs to the lipase chaperone family.

The protein localises to the cell inner membrane. Functionally, may be involved in the folding of the extracellular lipase during its passage through the periplasm. In Burkholderia lata (strain ATCC 17760 / DSM 23089 / LMG 22485 / NCIMB 9086 / R18194 / 383), this protein is Lipase chaperone.